The primary structure comprises 315 residues: MAPPKALAFGLLLAVVTATLAAAQKDCVCNNYKLTSRCYENENGECQCTSYGTQNTVICSKLASKCLVMKAEMTHSKSGRRMKPEGAIQNNDGLYDPECDEQGLFKAKQCNGTATCWCVNTAGVRRTDKDTEITCSERVRTYWIIIELKHKERAQPYNFESLHTALQDTFASRYMLNPKFIKSIMYENNVITIDLMQNSSQKTQDDVDIADVAYYFEKDVKGESLFHSSKSMDLRVNGELLDLDPGQTLIYYVDEKAPEFSMQGLTAGIIAVIVVVVLAVIAGIVVLVISTRKRSAKYEKAEIKEMGEIHRELNA.

The first 23 residues, 1 to 23 (MAPPKALAFGLLLAVVTATLAAA), serve as a signal peptide directing secretion. Topologically, residues 24 to 266 (QKDCVCNNYK…APEFSMQGLT (243 aa)) are extracellular. Cystine bridges form between Cys27–Cys46, Cys29–Cys59, Cys38–Cys48, Cys66–Cys99, Cys110–Cys116, and Cys118–Cys135. Residues 63 to 135 (ASKCLVMKAE…RTDKDTEITC (73 aa)) form the Thyroglobulin type-1 domain. Residue Asn111 is glycosylated (N-linked (GlcNAc...) asparagine). An N-linked (GlcNAc...) asparagine glycan is attached at Asn198. A helical transmembrane segment spans residues 267-289 (AGIIAVIVVVVLAVIAGIVVLVI). The Cytoplasmic segment spans residues 290–315 (STRKRSAKYEKAEIKEMGEIHRELNA).

The protein belongs to the EPCAM family. As to quaternary structure, monomer. Interacts with phosphorylated CLDN7. Glycosylation at Asn-198 is crucial for protein stability.

It is found in the lateral cell membrane. It localises to the cell junction. The protein resides in the tight junction. Functionally, may act as a physical homophilic interaction molecule between intestinal epithelial cells (IECs) and intraepithelial lymphocytes (IELs) at the mucosal epithelium for providing immunological barrier as a first line of defense against mucosal infection. Plays a role in embryonic stem cells proliferation and differentiation. Up-regulates the expression of FABP5, MYC and cyclins A and E. The chain is Epithelial cell adhesion molecule (Epcam) from Rattus norvegicus (Rat).